A 276-amino-acid chain; its full sequence is Imidazole glycerol phosphate synthase subunit HisF (276 aa).

Residues Asp11 and Asp130 contribute to the active site.

The protein belongs to the HisA/HisF family. In terms of assembly, heterodimer of HisH and HisF.

The protein localises to the cytoplasm. The catalysed reaction is 5-[(5-phospho-1-deoxy-D-ribulos-1-ylimino)methylamino]-1-(5-phospho-beta-D-ribosyl)imidazole-4-carboxamide + L-glutamine = D-erythro-1-(imidazol-4-yl)glycerol 3-phosphate + 5-amino-1-(5-phospho-beta-D-ribosyl)imidazole-4-carboxamide + L-glutamate + H(+). It functions in the pathway amino-acid biosynthesis; L-histidine biosynthesis; L-histidine from 5-phospho-alpha-D-ribose 1-diphosphate: step 5/9. Functionally, IGPS catalyzes the conversion of PRFAR and glutamine to IGP, AICAR and glutamate. The HisF subunit catalyzes the cyclization activity that produces IGP and AICAR from PRFAR using the ammonia provided by the HisH subunit. In Beijerinckia indica subsp. indica (strain ATCC 9039 / DSM 1715 / NCIMB 8712), this protein is Imidazole glycerol phosphate synthase subunit HisF.